Reading from the N-terminus, the 417-residue chain is MTQVDLVVVGKFLFKEKIIDGSIGIEDDKIAKFSLRELKGDKKIKVEKGKIILPGLIDVHVHLRDFNESYKETIASGTKAAIHGGITTVFDMPNTKPPIMDEKTLKLRELIFKKKSYSDYALGFLIAGNEPAKADFYKIFMGASTGGIYSKNFEEDYKKAPDIVSVHAEEYELINRYPERPPIVEVVAIKKALQASKKMKKPLHICHVSTKDGLKEILKANIPWVSFEVTPHHLFLTRRDYERSKLLKVYPPLRDEEDRRYLWENLKSIPIIASDHAPHTLEDKEAGAAGLPGLETEVALLLDAVNKGMITIWDIVAKMSINPARIFKIKNKGWEEGKDADLIVVDMKKEWTIKAENFYTKANWTPYEGWKVKGKVIMTILRGEVVMEDDEIIGKPRGERIVKEGNAQGNLGSSQEH.

Zn(2+)-binding residues include His-60 and His-62. Substrate is bound by residues His-62 to Arg-64 and Asn-94. Zn(2+) is bound by residues Lys-138, His-167, His-207, and Asp-275. Residue Lys-138 is modified to N6-carboxylysine. The active site involves Asp-275. Residues His-279 and Ala-289–Gly-290 contribute to the substrate site.

This sequence belongs to the metallo-dependent hydrolases superfamily. DHOase family. Class I DHOase subfamily. Zn(2+) is required as a cofactor.

The catalysed reaction is (S)-dihydroorotate + H2O = N-carbamoyl-L-aspartate + H(+). It participates in pyrimidine metabolism; UMP biosynthesis via de novo pathway; (S)-dihydroorotate from bicarbonate: step 3/3. Its function is as follows. Catalyzes the reversible cyclization of carbamoyl aspartate to dihydroorotate. The protein is Dihydroorotase of Pyrococcus horikoshii (strain ATCC 700860 / DSM 12428 / JCM 9974 / NBRC 100139 / OT-3).